A 312-amino-acid chain; its full sequence is D-alanine--D-alanine ligase (312 aa).

Residues 108 to 308 (KLVWQQTGIP…YSELVVKVLS (201 aa)) enclose the ATP-grasp domain. ATP is bound at residue 138 to 193 (VAKLGMPLFVKPASEGSSVAVEKVKSADALPAALEEAAKHDKIVIVEKSIEGGGEY). Asp-262, Glu-275, and Asn-277 together coordinate Mg(2+).

This sequence belongs to the D-alanine--D-alanine ligase family. It depends on Mg(2+) as a cofactor. The cofactor is Mn(2+).

It is found in the cytoplasm. It carries out the reaction 2 D-alanine + ATP = D-alanyl-D-alanine + ADP + phosphate + H(+). It participates in cell wall biogenesis; peptidoglycan biosynthesis. Cell wall formation. The polypeptide is D-alanine--D-alanine ligase (Burkholderia thailandensis (strain ATCC 700388 / DSM 13276 / CCUG 48851 / CIP 106301 / E264)).